Consider the following 475-residue polypeptide: Cytochrome c-552 (475 aa).

Residues 1 to 29 form the signal peptide; it reads MSIKHWMSAPIAVATLFASQLLLAGSVLA. The segment at 38 to 57 is disordered; it reads PRNDAFEQKHPDQYHSWKAT. Histidine 92 contacts heme c. Residues cysteine 120, cysteine 123, and lysine 124 each contribute to the heme site. Heme c is bound by residues cysteine 158, cysteine 161, histidine 162, cysteine 207, cysteine 210, and histidine 211. Glutamate 213, tyrosine 214, lysine 259, and glutamine 261 together coordinate Ca(2+). Tyrosine 214 contacts substrate. Histidine 262 contacts substrate. Histidine 273, cysteine 280, cysteine 283, histidine 284, histidine 299, cysteine 312, cysteine 315, histidine 316, and histidine 391 together coordinate heme c.

It belongs to the cytochrome c-552 family. Ca(2+) is required as a cofactor. Requires heme c as cofactor.

The protein localises to the periplasm. It carries out the reaction 6 Fe(III)-[cytochrome c] + NH4(+) + 2 H2O = 6 Fe(II)-[cytochrome c] + nitrite + 8 H(+). Its pathway is nitrogen metabolism; nitrate reduction (assimilation). Functionally, catalyzes the reduction of nitrite to ammonia, consuming six electrons in the process. The sequence is that of Cytochrome c-552 from Vibrio parahaemolyticus serotype O3:K6 (strain RIMD 2210633).